The following is a 185-amino-acid chain: Peptidyl-tRNA hydrolase (185 aa).

Residue Tyr-14 coordinates tRNA. The active-site Proton acceptor is the His-19. Residues Phe-64, Asn-66, and Asn-112 each contribute to the tRNA site.

Belongs to the PTH family. Monomer.

The protein resides in the cytoplasm. The enzyme catalyses an N-acyl-L-alpha-aminoacyl-tRNA + H2O = an N-acyl-L-amino acid + a tRNA + H(+). In terms of biological role, hydrolyzes ribosome-free peptidyl-tRNAs (with 1 or more amino acids incorporated), which drop off the ribosome during protein synthesis, or as a result of ribosome stalling. Catalyzes the release of premature peptidyl moieties from peptidyl-tRNA molecules trapped in stalled 50S ribosomal subunits, and thus maintains levels of free tRNAs and 50S ribosomes. This is Peptidyl-tRNA hydrolase from Levilactobacillus brevis (strain ATCC 367 / BCRC 12310 / CIP 105137 / JCM 1170 / LMG 11437 / NCIMB 947 / NCTC 947) (Lactobacillus brevis).